The chain runs to 922 residues: Lysine-specific demethylase 7A (922 aa).

The PHD-type zinc finger occupies 6–57; that stretch reads PVYCVCRQPYDVSRFMIECDICKDWFHSSCVKVEEHQAADIDLYHCPNCEVL. A JmjC domain is found at 199–355; it reads FSDTKMADLV…MQLRCYEMEK (157 aa). Thr248 is a binding site for substrate. Residues His251 and Asp253 each coordinate Fe cation. Lys268 lines the substrate pocket. Residue His323 coordinates Fe cation. Disordered stretches follow at residues 445–490, 565–607, 622–711, 754–773, and 872–902; these read EEEG…TKTP, RSLY…TQKP, GSSE…EQEA, GKEH…HHVK, and LHPT…MATA. Residues 473-483 show a composition bias toward basic residues; that stretch reads HHSGRKARRLR. Over residues 648 to 666 the composition is skewed to acidic residues; the sequence is ESESSGDDDDEEEEEEEER. Basic and acidic residues-rich tracts occupy residues 667-683 and 691-701; these read QEPI…RRLP and PDHDSPQKREC.

This sequence belongs to the JHDM1 histone demethylase family. JHDM1D subfamily. Fe(2+) is required as a cofactor.

It localises to the nucleus. Its function is as follows. Histone demethylase required for brain development. Specifically demethylates dimethylated 'Lys-9' and 'Lys-27' (H3K9me2 and H3K27me2, respectively) of histone H3 and monomethylated histone H4 'Lys-20' residue (H4K20Me1), thereby playing a central role in histone code. The sequence is that of Lysine-specific demethylase 7A (kdm7a) from Xenopus tropicalis (Western clawed frog).